A 62-amino-acid polypeptide reads, in one-letter code: Photosystem II reaction center protein Z (62 aa).

Helical transmembrane passes span 8–28 (ALFALIATSSILLISVPIVFA) and 41–61 (FSGTSLWIGLVFLVAILNSLI).

This sequence belongs to the PsbZ family. As to quaternary structure, PSII is composed of 1 copy each of membrane proteins PsbA, PsbB, PsbC, PsbD, PsbE, PsbF, PsbH, PsbI, PsbJ, PsbK, PsbL, PsbM, PsbT, PsbY, PsbZ, Psb30/Ycf12, at least 3 peripheral proteins of the oxygen-evolving complex and a large number of cofactors. It forms dimeric complexes.

The protein resides in the plastid. Its subcellular location is the chloroplast thylakoid membrane. In terms of biological role, may control the interaction of photosystem II (PSII) cores with the light-harvesting antenna, regulates electron flow through the 2 photosystem reaction centers. PSII is a light-driven water plastoquinone oxidoreductase, using light energy to abstract electrons from H(2)O, generating a proton gradient subsequently used for ATP formation. This Drimys granadensis protein is Photosystem II reaction center protein Z.